The following is a 327-amino-acid chain: Lipid phosphate phosphatase 1 (327 aa).

6 helical membrane-spanning segments follow: residues 51 to 71, 93 to 113, 118 to 138, 187 to 207, 217 to 237, and 244 to 264; these read WIIL…SPFY, IWSV…CFYL, VYDL…TGVI, FPSG…LYLS, GHVA…LVGI, and WHHW…AAFC.

This sequence belongs to the PA-phosphatase related phosphoesterase family. Strongly expressed in leaves, moderately in roots, weakly in floral hamps and flower buds, and not detected in adult flowers and seedpods.

It is found in the membrane. With respect to regulation, PA phosphatase activity inhibited by N-ethylmaleimide with an IC(50) value of 10 mM. Functionally, plays a general role in cellular responses to stress, may be by attenuating the signal produced by phospholipases. Exhibits both diacylglycerol pyrophosphate (DGPP) phosphatase and phosphatidate (PA) phosphatase activities. Substrate preference is diacylglycerol pyrophosphate &gt; phosphatidate. This Arabidopsis thaliana (Mouse-ear cress) protein is Lipid phosphate phosphatase 1 (LPP1).